Consider the following 98-residue polypeptide: Sec-independent protein translocase protein TatA (98 aa).

The chain crosses the membrane as a helical span at residues 1–21; the sequence is MGAMSPWHWAIVALVVVILFG. Residues 43–98 are disordered; the sequence is VKEMQNDNSTPAPTAQSAPPPQSAPAELPVADTTTAPVTPPAPVQPQSQHTEPKSA. The span at 66–79 shows a compositional bias: low complexity; it reads APAELPVADTTTAP.

The protein belongs to the TatA/E family. The Tat system comprises two distinct complexes: a TatABC complex, containing multiple copies of TatA, TatB and TatC subunits, and a separate TatA complex, containing only TatA subunits. Substrates initially bind to the TatABC complex, which probably triggers association of the separate TatA complex to form the active translocon.

Its subcellular location is the cell membrane. Its function is as follows. Part of the twin-arginine translocation (Tat) system that transports large folded proteins containing a characteristic twin-arginine motif in their signal peptide across membranes. TatA could form the protein-conducting channel of the Tat system. The polypeptide is Sec-independent protein translocase protein TatA (Rhodococcus erythropolis (Arthrobacter picolinophilus)).